Reading from the N-terminus, the 146-residue chain is Small ribosomal subunit protein uS13A (146 aa).

S2 is modified (N-acetylserine). A Glycyl lysine isopeptide (Lys-Gly) (interchain with G-Cter in ubiquitin) cross-link involves residue K36. The residue at position 48 (K48) is an N6-methyllysine; by RKM1. Residues K49, K80, and K96 each participate in a glycyl lysine isopeptide (Lys-Gly) (interchain with G-Cter in ubiquitin) cross-link.

It belongs to the universal ribosomal protein uS13 family. As to quaternary structure, component of the small ribosomal subunit (SSU). Mature yeast ribosomes consist of a small (40S) and a large (60S) subunit. The 40S small subunit contains 1 molecule of ribosomal RNA (18S rRNA) and 33 different proteins (encoded by 57 genes). The large 60S subunit contains 3 rRNA molecules (25S, 5.8S and 5S rRNA) and 46 different proteins (encoded by 81 genes). N-terminally acetylated by acetyltransferase NatA.

The protein resides in the cytoplasm. Component of the ribosome, a large ribonucleoprotein complex responsible for the synthesis of proteins in the cell. The small ribosomal subunit (SSU) binds messenger RNAs (mRNAs) and translates the encoded message by selecting cognate aminoacyl-transfer RNA (tRNA) molecules. The large subunit (LSU) contains the ribosomal catalytic site termed the peptidyl transferase center (PTC), which catalyzes the formation of peptide bonds, thereby polymerizing the amino acids delivered by tRNAs into a polypeptide chain. The nascent polypeptides leave the ribosome through a tunnel in the LSU and interact with protein factors that function in enzymatic processing, targeting, and the membrane insertion of nascent chains at the exit of the ribosomal tunnel. This is Small ribosomal subunit protein uS13A from Saccharomyces cerevisiae (strain ATCC 204508 / S288c) (Baker's yeast).